Consider the following 2062-residue polypeptide: Ankyrin repeat domain-containing protein 12 (2062 aa).

2 disordered regions span residues 1 to 119 (MPKS…GNKK) and 145 to 188 (ARDN…GETP). Residues 9-20 (PIQSENSDSDSN) show a composition bias toward polar residues. 2 stretches are compositionally biased toward basic and acidic residues: residues 41-57 (PKIE…EKSS) and 100-117 (YSEK…EAGN). Positions 145–172 (ARDNSPDSTPNHPSQTTPAQKKTPSSSS) are enriched in polar residues. At serine 149 the chain carries Phosphoserine. Positions 173 to 187 (RQKDKVNKRNERGET) are enriched in basic and acidic residues. ANK repeat units lie at residues 184-213 (RGET…NVNV), 217-246 (AGWT…DVNT), and 250-280 (DDDT…PFQA). 8 disordered regions span residues 301–338 (KREV…TEKD), 409–501 (KSFK…TRIT), 538–577 (ISTG…MSLQ), 609–683 (QKDF…DSAK), 727–788 (EKNI…FTSL), 812–1073 (EKHI…LVND), 1097–1227 (KHKE…RPPV), and 1328–1350 (EESN…KPEV). Positions 306–318 (LSDDDESYTDSEE) are enriched in acidic residues. Polar residues-rich tracts occupy residues 319-328 (AQSVNPSSVD) and 437-454 (KKIS…NSDM). Residues 455 to 467 (QTKKEYVVSGEHK) show a composition bias toward basic and acidic residues. Basic residues predominate over residues 468–480 (QKGKVKRKLKNQN). Residues 481-498 (KNKENQELKQEKEGKENT) show a composition bias toward basic and acidic residues. Serine 543 carries the post-translational modification Phosphoserine. Over residues 565-575 (TCLSPGSSEMS) the composition is skewed to polar residues. 8 stretches are compositionally biased toward basic and acidic residues: residues 609 to 631 (QKDF…DHSP), 639 to 649 (TLKKMDKEGKT), 658 to 683 (KERE…DSAK), 727 to 784 (EKNI…KDSE), 812 to 969 (EKHI…DKES), 977 to 1037 (HIQE…KDKI), 1061 to 1072 (KDTRPKEKRLVN), and 1103 to 1157 (KQKE…KQPK). Phosphoserine is present on serine 630. At serine 861 the chain carries Phosphoserine. The span at 1161-1189 (SNRSQSVDTKNVMTLGKSSFVSDNSLNRS) shows a compositional bias: polar residues. The span at 1200–1213 (SSRSVSMISVASSE) shows a compositional bias: low complexity. Residues 1328–1344 (EESNQGSLLTVPGDTSP) show a composition bias toward polar residues. Phosphoserine is present on serine 1401. Disordered regions lie at residues 1721–1744 (NAED…NTMA) and 1756–1795 (LLSE…VPQP). Residues 1729 to 1744 (NQIPQRMTRNKANTMA) are compositionally biased toward polar residues.

In terms of assembly, interacts with the PAS region of the p160 coactivators.

Its subcellular location is the nucleus. In terms of biological role, may recruit HDACs to the p160 coactivators/nuclear receptor complex to inhibit ligand-dependent transactivation. This chain is Ankyrin repeat domain-containing protein 12 (ANKRD12), found in Homo sapiens (Human).